Reading from the N-terminus, the 527-residue chain is Peptide chain release factor 3 (527 aa).

Positions 9 to 277 (AKRRTFAIIS…AVVDWAPRPL (269 aa)) constitute a tr-type G domain. Residues 18–25 (SHPDAGKT), 86–90 (DTPGH), and 140–143 (NKLD) contribute to the GTP site.

It belongs to the TRAFAC class translation factor GTPase superfamily. Classic translation factor GTPase family. PrfC subfamily.

It localises to the cytoplasm. In terms of biological role, increases the formation of ribosomal termination complexes and stimulates activities of RF-1 and RF-2. It binds guanine nucleotides and has strong preference for UGA stop codons. It may interact directly with the ribosome. The stimulation of RF-1 and RF-2 is significantly reduced by GTP and GDP, but not by GMP. The sequence is that of Peptide chain release factor 3 from Pseudomonas entomophila (strain L48).